A 400-amino-acid polypeptide reads, in one-letter code: uncharacterized protein (400 aa).

This sequence to M.jannaschii MJ1544 and MJ1637.

This is an uncharacterized protein from Haemophilus influenzae (strain ATCC 51907 / DSM 11121 / KW20 / Rd).